We begin with the raw amino-acid sequence, 149 residues long: D-aminoacyl-tRNA deacylase (149 aa).

Positions 141–142 (GP) match the Gly-cisPro motif, important for rejection of L-amino acids motif.

Belongs to the DTD family. As to quaternary structure, homodimer.

The protein resides in the cytoplasm. The enzyme catalyses glycyl-tRNA(Ala) + H2O = tRNA(Ala) + glycine + H(+). It carries out the reaction a D-aminoacyl-tRNA + H2O = a tRNA + a D-alpha-amino acid + H(+). Functionally, an aminoacyl-tRNA editing enzyme that deacylates mischarged D-aminoacyl-tRNAs. Also deacylates mischarged glycyl-tRNA(Ala), protecting cells against glycine mischarging by AlaRS. Acts via tRNA-based rather than protein-based catalysis; rejects L-amino acids rather than detecting D-amino acids in the active site. By recycling D-aminoacyl-tRNA to D-amino acids and free tRNA molecules, this enzyme counteracts the toxicity associated with the formation of D-aminoacyl-tRNA entities in vivo and helps enforce protein L-homochirality. In Streptomyces griseus subsp. griseus (strain JCM 4626 / CBS 651.72 / NBRC 13350 / KCC S-0626 / ISP 5235), this protein is D-aminoacyl-tRNA deacylase.